The sequence spans 150 residues: Nucleoside diphosphate kinase (150 aa).

The ATP site is built by Lys-9, Phe-57, Arg-85, Thr-91, Arg-102, and Asn-112. His-115 serves as the catalytic Pros-phosphohistidine intermediate.

Belongs to the NDK family. As to quaternary structure, homotetramer. Requires Mg(2+) as cofactor.

Its subcellular location is the cytoplasm. The enzyme catalyses a 2'-deoxyribonucleoside 5'-diphosphate + ATP = a 2'-deoxyribonucleoside 5'-triphosphate + ADP. It catalyses the reaction a ribonucleoside 5'-diphosphate + ATP = a ribonucleoside 5'-triphosphate + ADP. Major role in the synthesis of nucleoside triphosphates other than ATP. The ATP gamma phosphate is transferred to the NDP beta phosphate via a ping-pong mechanism, using a phosphorylated active-site intermediate. In Thermosynechococcus vestitus (strain NIES-2133 / IAM M-273 / BP-1), this protein is Nucleoside diphosphate kinase.